A 609-amino-acid chain; its full sequence is Chaperone protein DnaK (609 aa).

T172 is subject to Phosphothreonine; by autocatalysis. The disordered stretch occupies residues 578–609 (QAQAQQQAGAGGAAKKDENVVDAEFEEVKDDK). The segment covering 597 to 609 (VVDAEFEEVKDDK) has biased composition (acidic residues).

This sequence belongs to the heat shock protein 70 family.

Functionally, acts as a chaperone. The protein is Chaperone protein DnaK of Geobacillus sp. (strain WCH70).